Consider the following 506-residue polypeptide: Cysteine--tRNA ligase (506 aa).

Cysteine 34 is a binding site for Zn(2+). The 'HIGH' region signature appears at 36–46; the sequence is PTVYDFAHIGN. Residues cysteine 230, histidine 269, and glutamate 273 each coordinate Zn(2+). Residues 302 to 306 carry the 'KMSKS' region motif; it reads KMSKS. ATP is bound at residue lysine 305.

Belongs to the class-I aminoacyl-tRNA synthetase family. Monomer. Zn(2+) serves as cofactor.

The protein localises to the cytoplasm. It catalyses the reaction tRNA(Cys) + L-cysteine + ATP = L-cysteinyl-tRNA(Cys) + AMP + diphosphate. This is Cysteine--tRNA ligase from Brucella melitensis biotype 2 (strain ATCC 23457).